The chain runs to 463 residues: Flotillin-like protein 2 (463 aa).

Cys-35 is lipidated: S-palmitoyl cysteine. Residues 305–354 (EYETKVQEANWELYNKQKQAEAVLYEKQKQAEAQKAEADATFYSKQKEAE) adopt a coiled-coil conformation.

This sequence belongs to the band 7/mec-2 family. Flotillin subfamily. Post-translationally, may be palmitoylated.

Its subcellular location is the cell membrane. The protein localises to the membrane. It localises to the caveola. In terms of biological role, may act as a scaffolding protein within caveolar membranes, functionally participating in formation of caveolae or caveolae-like vesicles. This is Flotillin-like protein 2 (FLOT2) from Arabidopsis thaliana (Mouse-ear cress).